A 657-amino-acid chain; its full sequence is 9-cis-epoxycarotenoid dioxygenase NCED9, chloroplastic (657 aa).

Fe cation is bound by residues histidine 357, histidine 406, histidine 471, and histidine 642.

This sequence belongs to the carotenoid oxygenase family. Fe(2+) serves as cofactor. As to expression, expressed in developing siliques, embryo and endosperm.

The protein localises to the plastid. Its subcellular location is the chloroplast stroma. It carries out the reaction a 9-cis-epoxycarotenoid + O2 = a 12'-apo-carotenal + 2-cis,4-trans-xanthoxin. The enzyme catalyses 9-cis-violaxanthin + O2 = (3S,5R,6S)-5,6-epoxy-3-hydroxy-5,6-dihydro-12'-apo-beta-caroten-12'-al + 2-cis,4-trans-xanthoxin. It catalyses the reaction 9'-cis-neoxanthin + O2 = (3S,5R,6R)-3,5-dihydroxy-6,7-didehydro-5,6-dihydro-12'-apo-beta-caroten-12'-al + 2-cis,4-trans-xanthoxin. Has a 11,12(11',12') 9-cis epoxycarotenoid cleavage activity. Catalyzes the first step of abscisic-acid biosynthesis from carotenoids. Contributes probably to abscisic acid synthesis for the induction of seed dormancy. The polypeptide is 9-cis-epoxycarotenoid dioxygenase NCED9, chloroplastic (NCED9) (Arabidopsis thaliana (Mouse-ear cress)).